The chain runs to 155 residues: UBA-like domain-containing protein 1 (155 aa).

Residues 81–155 form a disordered region; sequence KASESFNSSS…KASAAMEAER (75 aa). The segment covering 83–96 has biased composition (low complexity); that stretch reads SESFNSSSSPSMAT. The segment covering 112–127 has biased composition (polar residues); the sequence is ANQQSLWTQGPSAQQT. Positions 139–155 are enriched in low complexity; sequence QQAASEQKASAAMEAER.

This sequence belongs to the UBALD family.

The chain is UBA-like domain-containing protein 1 (ubald1) from Danio rerio (Zebrafish).